A 122-amino-acid polypeptide reads, in one-letter code: Histone H2B type 2-K1 (122 aa).

The segment at 1 to 30 (MSAEYGQRQQPGGRGGRSSGNKKSKKRCRR) is disordered. Positions 20–30 (GNKKSKKRCRR) are enriched in basic residues. N6-(2-hydroxyisobutyryl)lysine; alternate is present on Lys-31. An N6-(beta-hydroxybutyryl)lysine; alternate modification is found at Lys-31. An N6-crotonyllysine; alternate modification is found at Lys-31. Lys-31 bears the N6-glutaryllysine; alternate mark. Lys-31 is subject to N6-succinyllysine; alternate. A Glycyl lysine isopeptide (Lys-Gly) (interchain with G-Cter in ubiquitin); alternate cross-link involves residue Lys-31. Ser-33 is subject to Phosphoserine. Lys-40, Lys-43, and Lys-54 each carry N6-(2-hydroxyisobutyryl)lysine; alternate. N6-glutaryllysine; alternate occurs at positions 40 and 43. Position 40 is an N6-lactoyllysine; alternate (Lys-40). At Lys-43 the chain carries N6-methyllysine. Lys-43 bears the N6-methyllysine; alternate mark. An N6,N6-dimethyllysine modification is found at Lys-54. Lys-54 is modified (N6,N6-dimethyllysine; alternate). Position 76 is a dimethylated arginine (Arg-76). Residue Ser-81 is modified to Phosphoserine. Residues Arg-83 and Arg-89 each carry the omega-N-methylarginine modification. Lys-105 carries the N6-(2-hydroxyisobutyryl)lysine; alternate modification. Lys-105 bears the N6-glutaryllysine; alternate mark. The residue at position 105 (Lys-105) is an N6-lactoyllysine; alternate. Lys-105 carries the N6-methyllysine modification. The residue at position 105 (Lys-105) is an N6-methyllysine; alternate. O-linked (GlcNAc) serine glycosylation occurs at Ser-109. Thr-112 bears the Phosphothreonine mark. An N6-(2-hydroxyisobutyryl)lysine; alternate mark is found at Lys-113 and Lys-117. 2 positions are modified to N6-(beta-hydroxybutyryl)lysine; alternate: Lys-113 and Lys-117. An N6-glutaryllysine; alternate mark is found at Lys-113 and Lys-117. N6-succinyllysine; alternate is present on residues Lys-113 and Lys-117. Position 113 is an N6-lactoyllysine; alternate (Lys-113). Position 113 is an N6-malonyllysine; alternate (Lys-113). An N6-methylated lysine; alternate modification is found at Lys-113. Lys-117 participates in a covalent cross-link: Glycyl lysine isopeptide (Lys-Gly) (interchain with G-Cter in ubiquitin); alternate.

It belongs to the histone H2B family. The nucleosome is a histone octamer containing two molecules each of H2A, H2B, H3 and H4 assembled in one H3-H4 heterotetramer and two H2A-H2B heterodimers. The octamer wraps approximately 147 bp of DNA.

The protein localises to the chromosome. The protein resides in the nucleus. In terms of biological role, core component of nucleosome. Nucleosomes wrap and compact DNA into chromatin, limiting DNA accessibility to the cellular machineries which require DNA as a template. Histones thereby play a central role in transcription regulation, DNA repair, DNA replication and chromosomal stability. DNA accessibility is regulated via a complex set of post-translational modifications of histones, also called histone code, and nucleosome remodeling. The chain is Histone H2B type 2-K1 from Homo sapiens (Human).